We begin with the raw amino-acid sequence, 525 residues long: MTENIHKHRILILDFGSQYTQLVARRVRELGVYCELWAWDVTEAQIRDFNPSGIILSGGPESTTEENSPRAPQYVFEAGVPVFGVCYGMQTMAMQLGGHVEASNEREFGYAQVEVVNDSALVRGIEDALTADGKPLLDVWMSHGDKVTAIPSDFVTVASTESCPFAIMANEEKRFYGVQFHPEVTHTRQGMRMLERFVRDICQCEALWTPAKIIDDAVARIREQVGDDKVILGLSGGVDSSVTAMLLHRAIGKNLTCVFVDNGLLRLNEAEQVLDMFGDHFGLNIVHVPAEDRFLSALAGENDPEAKRKIIGRVFVEVFDEEALKLEDVKWLAQGTIYPDVIESAASATGKAHVIKSHHNVGGLPKEMKMGLVEPLKELFKDEVRKIGLELGLPYDMLYRHPFPGPGLGVRVLGEVKKEYCDLLRRADAIFIEELRKADLYDKVSQAFTVFLPVRSVGVMGDGRKYDWVVSLRAVETIDFMTAHWARLPYDFLGRVSNRIINEVNGISRVVYDISGKPPATIEWE.

Residues 9–207 (RILILDFGSQ…VRDICQCEAL (199 aa)) enclose the Glutamine amidotransferase type-1 domain. Cys-86 functions as the Nucleophile in the catalytic mechanism. Active-site residues include His-181 and Glu-183. Residues 208–400 (WTPAKIIDDA…LGLPYDMLYR (193 aa)) form the GMPS ATP-PPase domain. 235–241 (SGGVDSS) contributes to the ATP binding site.

In terms of assembly, homodimer.

The catalysed reaction is XMP + L-glutamine + ATP + H2O = GMP + L-glutamate + AMP + diphosphate + 2 H(+). It functions in the pathway purine metabolism; GMP biosynthesis; GMP from XMP (L-Gln route): step 1/1. Its function is as follows. Catalyzes the synthesis of GMP from XMP. In Shigella sonnei (strain Ss046), this protein is GMP synthase [glutamine-hydrolyzing].